Reading from the N-terminus, the 314-residue chain is Methionyl-tRNA formyltransferase (314 aa).

112-115 contributes to the (6S)-5,6,7,8-tetrahydrofolate binding site; the sequence is SLLP.

This sequence belongs to the Fmt family.

It catalyses the reaction L-methionyl-tRNA(fMet) + (6R)-10-formyltetrahydrofolate = N-formyl-L-methionyl-tRNA(fMet) + (6S)-5,6,7,8-tetrahydrofolate + H(+). Functionally, attaches a formyl group to the free amino group of methionyl-tRNA(fMet). The formyl group appears to play a dual role in the initiator identity of N-formylmethionyl-tRNA by promoting its recognition by IF2 and preventing the misappropriation of this tRNA by the elongation apparatus. In Buchnera aphidicola subsp. Schizaphis graminum (strain Sg), this protein is Methionyl-tRNA formyltransferase.